The primary structure comprises 536 residues: GMP synthase [glutamine-hydrolyzing] (536 aa).

Positions 19–212 (RILILDFGSQ…VHEICDCAGS (194 aa)) constitute a Glutamine amidotransferase type-1 domain. Residue Cys96 is the Nucleophile of the active site. Catalysis depends on residues His186 and Glu188. The GMPS ATP-PPase domain maps to 213–411 (WTPDNIIDMR…LGLPAKMINR (199 aa)). 240–246 (SGGVDSS) lines the ATP pocket.

As to quaternary structure, homodimer.

It carries out the reaction XMP + L-glutamine + ATP + H2O = GMP + L-glutamate + AMP + diphosphate + 2 H(+). It functions in the pathway purine metabolism; GMP biosynthesis; GMP from XMP (L-Gln route): step 1/1. Functionally, catalyzes the synthesis of GMP from XMP. This chain is GMP synthase [glutamine-hydrolyzing], found in Psychrobacter arcticus (strain DSM 17307 / VKM B-2377 / 273-4).